The sequence spans 83 residues: Cytochrome b559 subunit alpha (83 aa).

The chain crosses the membrane as a helical span at residues 21-35 (VIHSITIPSLFIAGW). H23 serves as a coordination point for heme.

The protein belongs to the PsbE/PsbF family. Heterodimer of an alpha subunit and a beta subunit. PSII is composed of 1 copy each of membrane proteins PsbA, PsbB, PsbC, PsbD, PsbE, PsbF, PsbH, PsbI, PsbJ, PsbK, PsbL, PsbM, PsbT, PsbX, PsbY, PsbZ, Psb30/Ycf12, at least 3 peripheral proteins of the oxygen-evolving complex and a large number of cofactors. It forms dimeric complexes. Heme b serves as cofactor.

It is found in the plastid. Its subcellular location is the chloroplast thylakoid membrane. This b-type cytochrome is tightly associated with the reaction center of photosystem II (PSII). PSII is a light-driven water:plastoquinone oxidoreductase that uses light energy to abstract electrons from H(2)O, generating O(2) and a proton gradient subsequently used for ATP formation. It consists of a core antenna complex that captures photons, and an electron transfer chain that converts photonic excitation into a charge separation. The chain is Cytochrome b559 subunit alpha from Marchantia polymorpha (Common liverwort).